The chain runs to 695 residues: RING finger protein 145 (695 aa).

Transmembrane regions (helical) follow at residues 53-73, 77-97, 123-143, 146-166, 168-188, 225-245, 275-295, 316-336, 340-360, 384-404, 410-430, 460-480, and 482-502; these read YLAL…LTLP, LAKL…HQIS, FITA…VMKT, IWLF…IPIE, IVVI…YFLA, LVVP…QIYT, YSLL…LTLC, TEGV…LQVV, FLLS…MLEI, SLCL…CQFF, LLII…TLFV, LLEF…TVFG, and WTVM…WLRA. The segment at 537-575 adopts an RING-type; atypical zinc-finger fold; sequence CSICYQDMNSAVITPCSHFFHPGCLKKWLYVQETCPLCH. Positions 589–604 are enriched in polar residues; the sequence is SGSSTNPVVEQSANNP. The disordered stretch occupies residues 589–608; it reads SGSSTNPVVEQSANNPPQEP.

It localises to the membrane. The sequence is that of RING finger protein 145 (rnf145) from Xenopus laevis (African clawed frog).